Consider the following 447-residue polypeptide: Glycylpeptide N-tetradecanoyltransferase (447 aa).

Tetradecanoyl-CoA-binding positions include 38–41 (YKFW), 171–173 (LCV), and 179–183 (SKRLA). The Proton acceptor; via carboxylate role is filled by Leu447.

The protein belongs to the NMT family. As to quaternary structure, monomer.

Its subcellular location is the cytoplasm. The enzyme catalyses N-terminal glycyl-[protein] + tetradecanoyl-CoA = N-tetradecanoylglycyl-[protein] + CoA + H(+). Functionally, adds a myristoyl group to the N-terminal glycine residue of certain cellular proteins. The sequence is that of Glycylpeptide N-tetradecanoyltransferase (NMT1) from Kluyveromyces lactis (strain ATCC 8585 / CBS 2359 / DSM 70799 / NBRC 1267 / NRRL Y-1140 / WM37) (Yeast).